The sequence spans 187 residues: Elongation factor P (187 aa).

This sequence belongs to the elongation factor P family.

Its subcellular location is the cytoplasm. It participates in protein biosynthesis; polypeptide chain elongation. Involved in peptide bond synthesis. Stimulates efficient translation and peptide-bond synthesis on native or reconstituted 70S ribosomes in vitro. Probably functions indirectly by altering the affinity of the ribosome for aminoacyl-tRNA, thus increasing their reactivity as acceptors for peptidyl transferase. The polypeptide is Elongation factor P (Mycobacterium marinum (strain ATCC BAA-535 / M)).